Reading from the N-terminus, the 511-residue chain is MRSIKLHRLLDLVGIIPSLDLIDKEINNISFNSKEVQKGTLFLGMPGLNVDGGKYCIEAIENGAEAAIIGSAAKQKIGSIDRERILVIEDNLDYIFGQIVSEFWNRPSRKLKLIGVTGTNGKTTITFLLEYLLKKLGKKTALFGTLFNRWPGFSEVASHTTDFADKLQKKLNAAVDAESEFAILEVSSHSIAQNRISGCEFEAAIFTNLTQDHLDYHSDMESYFQTKRKLFFPPYLKDKDGISVLNHDDLWISKLSSDLEKRSSLVSTKITKSEFKNDGFFYVTDKQFTESGSTCIFHTPKEKIKLFVPLVGEFNLMNAIQAITILYKLNFSLKDLSKLIQSFPGAPGRMEKIEIDNNDVSRSLPIVIIDYAHTPDGLKKVLQSIKKLCKGKLITVFGCGGDRDRSKRPLMGSIAEEFSDHVFITSDNPRSEEPQQIVNDILMGIEKREKITFDIDRFKAINESIKFANKEDIVLIAGKGHEDYQILNDKVINFDDRKIAQKLLQEKSKSK.

Ser33 is a UDP-N-acetyl-alpha-D-muramoyl-L-alanyl-D-glutamate binding site. 118 to 124 contributes to the ATP binding site; the sequence is GTNGKTT. UDP-N-acetyl-alpha-D-muramoyl-L-alanyl-D-glutamate-binding positions include 160 to 161, Ser187, Gln193, and Arg195; that span reads TT. At Lys227 the chain carries N6-carboxylysine. Residues Arg403, 427–430, Gly478, and Glu482 contribute to the meso-2,6-diaminopimelate site; that span reads DNPR. The short motif at 427-430 is the Meso-diaminopimelate recognition motif element; sequence DNPR.

The protein belongs to the MurCDEF family. MurE subfamily. Mg(2+) serves as cofactor. Carboxylation is probably crucial for Mg(2+) binding and, consequently, for the gamma-phosphate positioning of ATP.

The protein resides in the cytoplasm. The catalysed reaction is UDP-N-acetyl-alpha-D-muramoyl-L-alanyl-D-glutamate + meso-2,6-diaminopimelate + ATP = UDP-N-acetyl-alpha-D-muramoyl-L-alanyl-gamma-D-glutamyl-meso-2,6-diaminopimelate + ADP + phosphate + H(+). It participates in cell wall biogenesis; peptidoglycan biosynthesis. Catalyzes the addition of meso-diaminopimelic acid to the nucleotide precursor UDP-N-acetylmuramoyl-L-alanyl-D-glutamate (UMAG) in the biosynthesis of bacterial cell-wall peptidoglycan. This Prochlorococcus marinus subsp. pastoris (strain CCMP1986 / NIES-2087 / MED4) protein is UDP-N-acetylmuramoyl-L-alanyl-D-glutamate--2,6-diaminopimelate ligase.